We begin with the raw amino-acid sequence, 541 residues long: Tripeptidyl aminopeptidase (541 aa).

The signal sequence occupies residues 1–36 (MRKSSIRRRATAFGTAGALVTATLIAGAVSAPAASA). Residues 37-39 (APA) constitute a propeptide that is removed on maturation. An AB hydrolase-1 domain is found at 123-501 (GALIYNPGGP…SRLITERDAG (379 aa)). S249 (nucleophile) is an active-site residue. Residue D474 is part of the active site. H503 serves as the catalytic Proton donor.

The protein belongs to the peptidase S33 family.

It is found in the secreted. In terms of biological role, cleaves tripeptides from the N-termini of proteins. Does not cleave mono- or dipeptides, or N-terminally blocked peptides. The protein is Tripeptidyl aminopeptidase of Streptomyces coelicolor (strain ATCC BAA-471 / A3(2) / M145).